A 157-amino-acid polypeptide reads, in one-letter code: MNPKTSEYQKQQRYQENEILEHAAEILANRYVRGDALTNPDATKEYVRCKLGSYEREVFALLLLDNQNRLIEFKELFQGTVDAASVYPREVVKAVLEVNAAAVIFAHNHPSGDSTPSQADRRITERLKDTLALVDVRVLDHIVTGDTCTSFAERGWL.

Positions 36-157 (ALTNPDATKE…CTSFAERGWL (122 aa)) constitute an MPN domain. 3 residues coordinate Zn(2+): H107, H109, and D120. Positions 107–120 (HNHPSGDSTPSQAD) match the JAMM motif motif.

Belongs to the UPF0758 family.

This is UPF0758 protein VC_0510 from Vibrio cholerae serotype O1 (strain ATCC 39315 / El Tor Inaba N16961).